Consider the following 686-residue polypeptide: Homoaconitase, mitochondrial (686 aa).

Residues 1 to 17 (MRVVRCVRRFSASRAVS) constitute a mitochondrion transit peptide. Residues Cys337, Cys401, and Cys404 each coordinate [4Fe-4S] cluster.

This sequence belongs to the aconitase/IPM isomerase family. [4Fe-4S] cluster serves as cofactor.

Its subcellular location is the mitochondrion. The catalysed reaction is (2R,3S)-homoisocitrate = cis-homoaconitate + H2O. It functions in the pathway amino-acid biosynthesis; L-lysine biosynthesis via AAA pathway; L-alpha-aminoadipate from 2-oxoglutarate: step 3/5. Its function is as follows. Catalyzes the reversible hydration of cis-homoaconitate to (2R,3S)-homoisocitrate, a step in the alpha-aminoadipate pathway for lysine biosynthesis. The polypeptide is Homoaconitase, mitochondrial (LYS4) (Eremothecium gossypii (strain ATCC 10895 / CBS 109.51 / FGSC 9923 / NRRL Y-1056) (Yeast)).